Consider the following 180-residue polypeptide: Negative modulator of initiation of replication (180 aa).

Interaction with DNA stretches follow at residues 86-87 (AV), 115-119 (RTRVY), and 149-155 (NTNTGRK).

This sequence belongs to the SeqA family. Homodimer. Polymerizes to form helical filaments.

It is found in the cytoplasm. Its function is as follows. Negative regulator of replication initiation, which contributes to regulation of DNA replication and ensures that replication initiation occurs exactly once per chromosome per cell cycle. Binds to pairs of hemimethylated GATC sequences in the oriC region, thus preventing assembly of replication proteins and re-initiation at newly replicated origins. Repression is relieved when the region becomes fully methylated. The protein is Negative modulator of initiation of replication of Enterobacter sp. (strain 638).